A 211-amino-acid chain; its full sequence is MMSPTPEDDRDLVVVRGRLRMMDNGAEHDRERRSYTAWPHLCCGCTIGIILTMFVIATTLLLASLFAFSYMSLESGTCPKEWIGLGYSCMRVAGNNATELEALDMCAQHNSKLIDFTNAKTLVEAIVPFGSTNASFGNIFRLRDSRSTCILPTIGGPISVDCPRTCSVVCQRPRPLSTTASIIRDARIYLRLERRDYYEVYSSILSNAIMK.

Topologically, residues 1–46 (MMSPTPEDDRDLVVVRGRLRMMDNGAEHDRERRSYTAWPHLCCGCT) are intravirion. Residues 47–67 (IGIILTMFVIATTLLLASLFA) traverse the membrane as a helical; Signal-anchor for type II membrane protein segment. The Virion surface segment spans residues 68–211 (FSYMSLESGT…SSILSNAIMK (144 aa)). N-linked (GlcNAc...) asparagine; by host glycosylation is found at Asn96 and Asn133.

It belongs to the herpesviridae HHV-1 UL45 family.

The protein localises to the virion membrane. The sequence is that of Envelope protein UL45 homolog (UL45H) from Gallid herpesvirus 2 (strain bc-1) (GaHV-2).